The primary structure comprises 351 residues: MTIKVLVVDDSALIRNLLGQMIEADSELSLVGMAADAYMAKDMVNQHRPDVITLDIEMPKVDGLTFLDRLMKARPTAVVMISSLTEEGADATFNALALGAVDFIPKPKLDSPQDFNEYQDLILEKIKSAAHAKLKTQRAAPAVVVQPSHKPALSSRVINTQLVAIGASTGGTEAILSLLQQFPAVMPPIVITQHMPPGFTRTFAERLNKLTRLNVKQAEDGERLLPCYVYIAPGDQHLEVIKVGGSFKTRLTQGDKVSGHRPSVDVLFNSVAECAGANTTAAILTGMGKDGADGMALIDEQGGKTFAQGEQSCVVFGMPREAIKRGVIHHVVELPQLADKMLNYLASLKRD.

In terms of domain architecture, Response regulatory spans 4–121 (KVLVVDDSAL…PQDFNEYQDL (118 aa)). Asp-55 is modified (4-aspartylphosphate). The CheB-type methylesterase domain occupies 156 to 348 (RVINTQLVAI…DKMLNYLASL (193 aa)). Residues Ser-168, His-194, and Asp-290 contribute to the active site.

This sequence belongs to the CheB family. Phosphorylated by CheA. Phosphorylation of the N-terminal regulatory domain activates the methylesterase activity.

It localises to the cytoplasm. It catalyses the reaction [protein]-L-glutamate 5-O-methyl ester + H2O = L-glutamyl-[protein] + methanol + H(+). The enzyme catalyses L-glutaminyl-[protein] + H2O = L-glutamyl-[protein] + NH4(+). Functionally, involved in chemotaxis. Part of a chemotaxis signal transduction system that modulates chemotaxis in response to various stimuli. Catalyzes the demethylation of specific methylglutamate residues introduced into the chemoreceptors (methyl-accepting chemotaxis proteins or MCP) by CheR. Also mediates the irreversible deamidation of specific glutamine residues to glutamic acid. This is Protein-glutamate methylesterase/protein-glutamine glutaminase 2 from Shewanella sp. (strain MR-4).